The primary structure comprises 264 residues: Thymidylate synthase (264 aa).

Arg-21 contributes to the dUMP binding site. His-51 is a binding site for (6R)-5,10-methylene-5,6,7,8-tetrahydrofolate. 126-127 (RR) contributes to the dUMP binding site. The active-site Nucleophile is the Cys-146. DUMP is bound by residues 166-169 (RSAD), Asn-177, and 207-209 (HLY). Residue Asp-169 coordinates (6R)-5,10-methylene-5,6,7,8-tetrahydrofolate. Ala-263 provides a ligand contact to (6R)-5,10-methylene-5,6,7,8-tetrahydrofolate.

It belongs to the thymidylate synthase family. Bacterial-type ThyA subfamily. As to quaternary structure, homodimer.

Its subcellular location is the cytoplasm. The catalysed reaction is dUMP + (6R)-5,10-methylene-5,6,7,8-tetrahydrofolate = 7,8-dihydrofolate + dTMP. It functions in the pathway pyrimidine metabolism; dTTP biosynthesis. Functionally, catalyzes the reductive methylation of 2'-deoxyuridine-5'-monophosphate (dUMP) to 2'-deoxythymidine-5'-monophosphate (dTMP) while utilizing 5,10-methylenetetrahydrofolate (mTHF) as the methyl donor and reductant in the reaction, yielding dihydrofolate (DHF) as a by-product. This enzymatic reaction provides an intracellular de novo source of dTMP, an essential precursor for DNA biosynthesis. The polypeptide is Thymidylate synthase (Thiobacillus denitrificans (strain ATCC 25259 / T1)).